Reading from the N-terminus, the 179-residue chain is MNPRRKSRLTIILFVLLGVTIASSLVLYALRQNIDLFYTPSEVISGKNDDPDTIPEVGQRIRVGGMVVEGTVKRDPNSLKVSFNVNDIGPEITVEYEGILPDLFREGQGIVAQGVLKEPKLLEATEVLAKHDENYVPPDLSEKMEQVHKPMGISNQDMQGESDRDRLDKAVNSVEEGKK.

Over 1–8 (MNPRRKSR) the chain is Cytoplasmic. Residues 9–29 (LTIILFVLLGVTIASSLVLYA) form a helical; Signal-anchor for type II membrane protein membrane-spanning segment. The Periplasmic segment spans residues 30–179 (LRQNIDLFYT…AVNSVEEGKK (150 aa)). Heme is bound by residues His131 and Tyr135. Basic and acidic residues-rich tracts occupy residues 138–148 (PDLSEKMEQVH) and 161–179 (ESDR…EGKK). The interval 138–179 (PDLSEKMEQVHKPMGISNQDMQGESDRDRLDKAVNSVEEGKK) is disordered.

Belongs to the CcmE/CycJ family.

It localises to the cell inner membrane. Its function is as follows. Heme chaperone required for the biogenesis of c-type cytochromes. Transiently binds heme delivered by CcmC and transfers the heme to apo-cytochromes in a process facilitated by CcmF and CcmH. The polypeptide is Cytochrome c-type biogenesis protein CcmE (Mannheimia succiniciproducens (strain KCTC 0769BP / MBEL55E)).